We begin with the raw amino-acid sequence, 433 residues long: Sensor protein RstB (433 aa).

Topologically, residues 1-3 (MKK) are cytoplasmic. Residues 4–24 (LFIQFYLLLFVCFLVMSLLVG) traverse the membrane as a helical segment. Topologically, residues 25–135 (LVYKFTAERA…PYLYYLHQMR (111 aa)) are periplasmic. Residues 136–156 (LLDIALIAFIAISLAFPVFIW) traverse the membrane as a helical segment. Residues 157-433 (MRPHWQDMLK…WHNIPQFTSA (277 aa)) lie on the Cytoplasmic side of the membrane. Positions 158–210 (RPHWQDMLKLEAAAQRFGDGHLNERIHFDEGSSFERLGVAFNQMADNINALIA) constitute an HAMP domain. In terms of domain architecture, Histidine kinase spans 218–425 (GIAHELRTPL…RFSFSWPLWH (208 aa)). Residue H276 is modified to Phosphohistidine; by autocatalysis.

In terms of processing, autophosphorylated.

The protein localises to the cell inner membrane. The enzyme catalyses ATP + protein L-histidine = ADP + protein N-phospho-L-histidine.. In terms of biological role, member of the two-component regulatory system RstB/RstA. RstB functions as a membrane-associated protein kinase that phosphorylates RstA. The polypeptide is Sensor protein RstB (rstB) (Escherichia coli (strain K12)).